The primary structure comprises 296 residues: 33 kDa chaperonin (296 aa).

Cystine bridges form between Cys-233–Cys-235 and Cys-267–Cys-270.

Belongs to the HSP33 family. In terms of processing, under oxidizing conditions two disulfide bonds are formed involving the reactive cysteines. Under reducing conditions zinc is bound to the reactive cysteines and the protein is inactive.

It is found in the cytoplasm. In terms of biological role, redox regulated molecular chaperone. Protects both thermally unfolding and oxidatively damaged proteins from irreversible aggregation. Plays an important role in the bacterial defense system toward oxidative stress. The chain is 33 kDa chaperonin from Actinobacillus pleuropneumoniae serotype 7 (strain AP76).